We begin with the raw amino-acid sequence, 103 residues long: Sec-independent protein translocase protein TatA (103 aa).

A helical transmembrane segment spans residues 1-21 (MGNIFSPTHLIVILLIIIVLF). The interval 77–103 (KRATTRVKGSSSSRKGKTSVVKKQRVK) is disordered. A compositionally biased stretch (basic residues) spans 90-103 (RKGKTSVVKKQRVK).

The protein belongs to the TatA/E family. As to quaternary structure, the Tat system comprises two distinct complexes: a TatABC complex, containing multiple copies of TatA, TatB and TatC subunits, and a separate TatA complex, containing only TatA subunits. Substrates initially bind to the TatABC complex, which probably triggers association of the separate TatA complex to form the active translocon.

The protein localises to the cell inner membrane. In terms of biological role, part of the twin-arginine translocation (Tat) system that transports large folded proteins containing a characteristic twin-arginine motif in their signal peptide across membranes. TatA could form the protein-conducting channel of the Tat system. This Bartonella henselae (strain ATCC 49882 / DSM 28221 / CCUG 30454 / Houston 1) (Rochalimaea henselae) protein is Sec-independent protein translocase protein TatA.